The sequence spans 351 residues: S-adenosylmethionine:tRNA ribosyltransferase-isomerase (351 aa).

It belongs to the QueA family. Monomer.

Its subcellular location is the cytoplasm. The enzyme catalyses 7-aminomethyl-7-carbaguanosine(34) in tRNA + S-adenosyl-L-methionine = epoxyqueuosine(34) in tRNA + adenine + L-methionine + 2 H(+). It participates in tRNA modification; tRNA-queuosine biosynthesis. Functionally, transfers and isomerizes the ribose moiety from AdoMet to the 7-aminomethyl group of 7-deazaguanine (preQ1-tRNA) to give epoxyqueuosine (oQ-tRNA). This Hyphomonas neptunium (strain ATCC 15444) protein is S-adenosylmethionine:tRNA ribosyltransferase-isomerase.